Here is a 356-residue protein sequence, read N- to C-terminus: Surface presentation of antigens protein SpaS (356 aa).

5 helical membrane-spanning segments follow: residues 29 to 49 (LIIA…GSFN), 72 to 92 (LAVF…CLVC), 132 to 152 (VKDT…AIIC), 179 to 199 (LLAL…LDAI), and 261 to 281 (HITI…ISVY).

This sequence belongs to the type III secretion exporter family.

Its subcellular location is the cell inner membrane. Its function is as follows. Involved in a secretory pathway responsible for the surface presentation of determinants needed for the entry of Salmonella species into mammalian cells. The sequence is that of Surface presentation of antigens protein SpaS (spaS) from Salmonella typhimurium (strain LT2 / SGSC1412 / ATCC 700720).